We begin with the raw amino-acid sequence, 452 residues long: Phosphoglucosamine mutase (452 aa).

Residue Ser101 is the Phosphoserine intermediate of the active site. Residues Ser101, Asp241, Asp243, and Asp245 each contribute to the Mg(2+) site. Position 101 is a phosphoserine (Ser101).

It belongs to the phosphohexose mutase family. It depends on Mg(2+) as a cofactor. Activated by phosphorylation.

The enzyme catalyses alpha-D-glucosamine 1-phosphate = D-glucosamine 6-phosphate. Catalyzes the conversion of glucosamine-6-phosphate to glucosamine-1-phosphate. This chain is Phosphoglucosamine mutase, found in Lactococcus lactis subsp. cremoris (strain SK11).